Reading from the N-terminus, the 859-residue chain is Kinesin-like protein KIN-14T (859 aa).

Positions 91–411 constitute a Kinesin motor domain; it reads NIRVFCRVKP…LNFATRAKNI (321 aa). Position 168–175 (168–175) interacts with ATP; that stretch reads GQTGTGKT. Residues 422–463 are a coiled coil; sequence QAKKEAVMMNLQKMMEKIEQEREMSLRKMRNLNETLEKLTGK. Residues 511–530 form a disordered region; it reads LSGADFSVTPNSSSFKSRRN. Residues 518–530 show a composition bias toward polar residues; that stretch reads VTPNSSSFKSRRN.

This sequence belongs to the TRAFAC class myosin-kinesin ATPase superfamily. Kinesin family. KIN-14 subfamily.

The chain is Kinesin-like protein KIN-14T from Arabidopsis thaliana (Mouse-ear cress).